Consider the following 467-residue polypeptide: Probable protein phosphatase 2C 6 (467 aa).

The interval 61-81 is disordered; that stretch reads VEDDAVAPGRGEEGGEASAVG. One can recognise a PPM-type phosphatase domain in the interval 149-457; the sequence is LWGHKSICGR…DNISVIVVDL (309 aa). Mn(2+) contacts are provided by D205, G206, D386, and D448.

This sequence belongs to the PP2C family. In terms of assembly, interacts with PYL9. Mg(2+) serves as cofactor. Requires Mn(2+) as cofactor.

The protein localises to the nucleus. The protein resides in the cytoplasm. It localises to the cytosol. The catalysed reaction is O-phospho-L-seryl-[protein] + H2O = L-seryl-[protein] + phosphate. It carries out the reaction O-phospho-L-threonyl-[protein] + H2O = L-threonyl-[protein] + phosphate. Probable protein phosphatase that may function in abscisic acid (ABA) signaling. This is Probable protein phosphatase 2C 6 from Oryza sativa subsp. japonica (Rice).